We begin with the raw amino-acid sequence, 267 residues long: Integral membrane protein 2C (267 aa).

The residue at position 37 (threonine 37) is a Phosphothreonine. The helical; Signal-anchor for type II membrane protein transmembrane segment at 55–75 (VGGVCYLSMGMVVLLMGLVFA) threads the bilayer. The 95-residue stretch at 136–230 (FGGGDPADII…LCNGKDTYRL (95 aa)) folds into the BRICHOS domain. A disulfide bridge links cysteine 163 with cysteine 222. Asparagine 169 is a glycosylation site (N-linked (GlcNAc...) asparagine).

The protein belongs to the ITM2 family. Interacts with BACE1. Interacts with APP. Interacts with STMN2. Post-translationally, type I membrane-bound, as well as soluble, furin has a pre-eminent role in ITM2C proteolytic processing. PCSK7 and PCSK5 may also be involved although to a lesser extent. The soluble form of PCSK7 is incapable of processing ITM2C. Fails to undergo shedding by ADAM10 and intramembrane cleavage by SPPL2B.

The protein resides in the lysosome membrane. Its subcellular location is the cell membrane. Its function is as follows. Negative regulator of amyloid-beta peptide production. May inhibit the processing of APP by blocking its access to alpha- and beta-secretase. Binding to the beta-secretase-cleaved APP C-terminal fragment is negligible, suggesting that ITM2C is a poor gamma-secretase cleavage inhibitor. May play a role in TNF-induced cell death and neuronal differentiation. This Macaca fascicularis (Crab-eating macaque) protein is Integral membrane protein 2C (ITM2C).